The following is a 412-amino-acid chain: UPF0754 membrane protein syc0451_d (412 aa).

A run of 2 helical transmembrane segments spans residues 8–28 (LWLL…DLAI) and 390–410 (IGGV…VWSL).

This sequence belongs to the UPF0754 family.

The protein localises to the cell inner membrane. The protein is UPF0754 membrane protein syc0451_d of Synechococcus sp. (strain ATCC 27144 / PCC 6301 / SAUG 1402/1) (Anacystis nidulans).